Consider the following 520-residue polypeptide: Leucine carboxyl methyltransferase 1 (520 aa).

Disordered stretches follow at residues Met-1–Val-116 and Thr-142–Arg-174. Positions Pro-79 to Arg-89 are enriched in low complexity. Polar residues-rich tracts occupy residues His-95–Arg-110 and Thr-142–Ser-151. S-adenosyl-L-methionine-binding positions include Arg-185, Gly-210, Asp-237, Asp-305–Val-306, and Glu-343.

The protein belongs to the methyltransferase superfamily. LCMT family.

The catalysed reaction is [phosphatase 2A protein]-C-terminal L-leucine + S-adenosyl-L-methionine = [phosphatase 2A protein]-C-terminal L-leucine methyl ester + S-adenosyl-L-homocysteine. Methylates the carboxyl group of the C-terminal leucine residue of protein phosphatase 2A catalytic subunits to form alpha-leucine ester residues. The sequence is that of Leucine carboxyl methyltransferase 1 (PPM1) from Mycosarcoma maydis (Corn smut fungus).